Reading from the N-terminus, the 540-residue chain is Ubiquitin carboxyl-terminal hydrolase 17-like protein E (540 aa).

The segment at 1-22 (MVVSLSFPEETGGENLPSAPLE) is disordered. In terms of domain architecture, USP spans 85–382 (CGLQNTGNSC…NAYVLFYVQQ (298 aa)). Residue cysteine 94 is the Nucleophile of the active site. Histidine 341 acts as the Proton acceptor in catalysis. Composition is skewed to basic and acidic residues over residues 431–441 (NREKRAKKETS) and 508–520 (APDK…HNGD). Disordered regions lie at residues 431–461 (NREK…QKHG) and 499–540 (RSTA…QGGR). Residues 523-540 (LTSQGLMSPGQLCSQGGR) show a composition bias toward polar residues.

The protein belongs to the peptidase C19 family. USP17 subfamily. In terms of assembly, interacts with SUDS3; the interaction is direct.

The protein resides in the nucleus. It localises to the endoplasmic reticulum. It carries out the reaction Thiol-dependent hydrolysis of ester, thioester, amide, peptide and isopeptide bonds formed by the C-terminal Gly of ubiquitin (a 76-residue protein attached to proteins as an intracellular targeting signal).. Functionally, deubiquitinating enzyme that removes conjugated ubiquitin from specific proteins to regulate different cellular processes that may include cell proliferation, progression through the cell cycle, apoptosis, cell migration, and the cellular response to viral infection. The sequence is that of Ubiquitin carboxyl-terminal hydrolase 17-like protein E (Usp17le) from Mus musculus (Mouse).